Here is a 327-residue protein sequence, read N- to C-terminus: MSFVAHPNIDPKSLGKVGVLLGGKSAEREISLLSGNGVLAALKSRGVDAHPFDPGLQPISELAAAGFDRVFIALHGRYGEDGTMQGLLEQLGIPYTGSGVLASALAMDKQATKRLWMTHGLATPRFAMLYANTDFDAVVADLGLPLIVKPAREGSSIGLTKVIAADQMRAAFEKAAGLDADVIAETFIDGAELTCPIVGEGPTAEALPVIKIVAPESNYDYQNKYFTDDTQYLCPSTLPDALEREVRALAVEAFRVLGCRGWARADVMLTRDGKPYLLEMNTSPGMTGHSLVPMAARANGISYEDFVMQVLAAATLDLHPNEHWKPE.

The ATP-grasp domain maps to 113-312; the sequence is KRLWMTHGLA…YEDFVMQVLA (200 aa). Residue 139–194 coordinates ATP; sequence VADLGLPLIVKPAREGSSIGLTKVIAADQMRAAFEKAAGLDADVIAETFIDGAELT. The Mg(2+) site is built by Asp-266, Glu-279, and Asn-281.

This sequence belongs to the D-alanine--D-alanine ligase family. The cofactor is Mg(2+). Mn(2+) serves as cofactor.

It is found in the cytoplasm. The enzyme catalyses 2 D-alanine + ATP = D-alanyl-D-alanine + ADP + phosphate + H(+). It participates in cell wall biogenesis; peptidoglycan biosynthesis. In terms of biological role, cell wall formation. This is D-alanine--D-alanine ligase from Cupriavidus metallidurans (strain ATCC 43123 / DSM 2839 / NBRC 102507 / CH34) (Ralstonia metallidurans).